Reading from the N-terminus, the 233-residue chain is Orotidine 5'-phosphate decarboxylase (233 aa).

Residues aspartate 11, lysine 33, aspartate 60–threonine 69, threonine 120, arginine 181, glutamine 190, glycine 210, and arginine 211 each bind substrate. Lysine 62 serves as the catalytic Proton donor.

It belongs to the OMP decarboxylase family. Type 1 subfamily. As to quaternary structure, homodimer.

The catalysed reaction is orotidine 5'-phosphate + H(+) = UMP + CO2. It functions in the pathway pyrimidine metabolism; UMP biosynthesis via de novo pathway; UMP from orotate: step 2/2. In terms of biological role, catalyzes the decarboxylation of orotidine 5'-monophosphate (OMP) to uridine 5'-monophosphate (UMP). The sequence is that of Orotidine 5'-phosphate decarboxylase from Vibrio parahaemolyticus serotype O3:K6 (strain RIMD 2210633).